A 141-amino-acid polypeptide reads, in one-letter code: Actin-depolymerizing factor 9 (141 aa).

A Phosphoserine modification is found at S8. The ADF-H domain occupies 8-141 (SGMWMTDDCK…GFDKIQDRAK (134 aa)).

The protein belongs to the actin-binding proteins ADF family.

The protein resides in the cytoplasm. It is found in the cytoskeleton. Functionally, does not display typical F-actin depolymerizing activity. Exhibits a high ability to stabilize and cross-link actin filaments. Functions as an actin bundling protein with the highest efficiency under acidic conditions. May play a role in the modulation of levels of histone H3 lysine 4 trimethylation and H3 lysine 9 and 14 acetylation at the FLC locus. This is Actin-depolymerizing factor 9 (ADF9) from Arabidopsis thaliana (Mouse-ear cress).